Here is a 694-residue protein sequence, read N- to C-terminus: Glycine--tRNA ligase beta subunit (694 aa).

Belongs to the class-II aminoacyl-tRNA synthetase family. In terms of assembly, tetramer of two alpha and two beta subunits.

The protein localises to the cytoplasm. It carries out the reaction tRNA(Gly) + glycine + ATP = glycyl-tRNA(Gly) + AMP + diphosphate. This chain is Glycine--tRNA ligase beta subunit, found in Shewanella denitrificans (strain OS217 / ATCC BAA-1090 / DSM 15013).